We begin with the raw amino-acid sequence, 95 residues long: UPF0125 protein BUsg_244 (95 aa).

Belongs to the UPF0125 (RnfH) family.

This Buchnera aphidicola subsp. Schizaphis graminum (strain Sg) protein is UPF0125 protein BUsg_244.